The following is a 445-amino-acid chain: Phosphoglucosamine mutase (445 aa).

The Phosphoserine intermediate role is filled by S101. Mg(2+) contacts are provided by S101, D240, D242, and D244. S101 bears the Phosphoserine mark.

The protein belongs to the phosphohexose mutase family. Requires Mg(2+) as cofactor. Post-translationally, activated by phosphorylation.

It carries out the reaction alpha-D-glucosamine 1-phosphate = D-glucosamine 6-phosphate. Its function is as follows. Catalyzes the conversion of glucosamine-6-phosphate to glucosamine-1-phosphate. The sequence is that of Phosphoglucosamine mutase from Pseudomonas fluorescens (strain SBW25).